We begin with the raw amino-acid sequence, 221 residues long: Small ribosomal subunit protein uS5 (221 aa).

One can recognise an S5 DRBM domain in the interval 46-109; it reads LKDEVINIER…DNAKLNIIEI (64 aa).

This sequence belongs to the universal ribosomal protein uS5 family. As to quaternary structure, part of the 30S ribosomal subunit. Contacts protein S4.

Functionally, with S4 and S12 plays an important role in translational accuracy. The protein is Small ribosomal subunit protein uS5 of Picrophilus torridus (strain ATCC 700027 / DSM 9790 / JCM 10055 / NBRC 100828 / KAW 2/3).